Reading from the N-terminus, the 151-residue chain is Ribosome maturation factor RimP (151 aa).

The protein belongs to the RimP family.

The protein resides in the cytoplasm. Required for maturation of 30S ribosomal subunits. The protein is Ribosome maturation factor RimP of Shewanella oneidensis (strain ATCC 700550 / JCM 31522 / CIP 106686 / LMG 19005 / NCIMB 14063 / MR-1).